We begin with the raw amino-acid sequence, 352 residues long: Anthranilate phosphoribosyltransferase (352 aa).

Residues Gly-83, 86–87 (GD), Thr-91, 93–96 (NIST), 111–119 (KHGGRSVSS), and Ala-123 each bind 5-phospho-alpha-D-ribose 1-diphosphate. Position 83 (Gly-83) interacts with anthranilate. Mg(2+) is bound at residue Ser-95. Arg-169 contacts anthranilate. Mg(2+) contacts are provided by Asp-228 and Glu-229.

It belongs to the anthranilate phosphoribosyltransferase family. As to quaternary structure, homodimer. Mg(2+) serves as cofactor.

It carries out the reaction N-(5-phospho-beta-D-ribosyl)anthranilate + diphosphate = 5-phospho-alpha-D-ribose 1-diphosphate + anthranilate. It functions in the pathway amino-acid biosynthesis; L-tryptophan biosynthesis; L-tryptophan from chorismate: step 2/5. Catalyzes the transfer of the phosphoribosyl group of 5-phosphorylribose-1-pyrophosphate (PRPP) to anthranilate to yield N-(5'-phosphoribosyl)-anthranilate (PRA). The protein is Anthranilate phosphoribosyltransferase of Neisseria meningitidis serogroup C (strain 053442).